Here is a 365-residue protein sequence, read N- to C-terminus: Large ribosomal subunit protein uL3 (365 aa).

The segment at 343–365 (RPPKKKPPVQRPQITYVSVESKQ) is disordered. Over residues 354–365 (PQITYVSVESKQ) the composition is skewed to polar residues.

It belongs to the universal ribosomal protein uL3 family. In terms of assembly, part of the 50S ribosomal subunit. Forms a cluster with proteins L14 and L24e.

Functionally, one of the primary rRNA binding proteins, it binds directly near the 3'-end of the 23S rRNA, where it nucleates assembly of the 50S subunit. This is Large ribosomal subunit protein uL3 from Pyrococcus furiosus (strain ATCC 43587 / DSM 3638 / JCM 8422 / Vc1).